We begin with the raw amino-acid sequence, 400 residues long: WD repeat and FYVE domain-containing protein 2 (400 aa).

6 WD repeats span residues 22–61 (GSQE…QYWP), 66–105 (AMPS…NKMT), 112–150 (AHQS…QRLG), 153–192 (RTSA…CTLL), 197–236 (GHTG…GTAI), and 240–279 (GHND…QETP). The FYVE-type zinc finger occupies 281-352 (WLDSDSCQKC…VCDSCHEAIT (72 aa)). Zn(2+) is bound by residues Cys287, Cys290, Cys314, Cys317, Cys322, Cys325, Cys344, and Cys347. The stretch at 364 to 399 (DSKHNIVHVHFDATRGWLLTSGTDKVIKLWDMTPVV) is one WD 7 repeat.

Homodimer. Interacts (via WD repeats 1-3) with AKT1, AKT2, PRKCZ and PRKCI. Interacts with VAMP2. Forms a complex with VAMP2 and PRKCZ. Interacts with FOXO1. Forms a complex with AKT1 and FOXO1. In terms of tissue distribution, highly expressed in the brain (at protein level).

It localises to the endosome. The protein resides in the early endosome. It is found in the cytoplasm. In terms of biological role, acts in an adapter protein-like fashion to mediate the interaction between the kinase PRKCZ and its substrate VAMP2 and increases the PRKCZ-dependent phosphorylation of VAMP2. Positively regulates adipocyte differentiation, by facilitating the phosphorylation and thus inactivation of the anti-adipogenetic transcription factor FOXO1 by the kinase AKT1. Plays a role in endosomal control of AKT2 signaling; required for insulin-stimulated AKT2 phosphorylation and glucose uptake and insulin-stimulated phosphorylation of AKT2 substrates. Participates in transferrin receptor endocytosis. This Mus musculus (Mouse) protein is WD repeat and FYVE domain-containing protein 2 (Wdfy2).